The following is a 541-amino-acid chain: MDSKRSLLFMALLFISFLIYQQWQVDYNTPKPEMTEQAQVSEVNSTALTATSDIANDTQAKGRVITLENDVFRLKVNTLGGDVIGSELLNYDAELHSSAPFVLLQNNADKVYIAQSGLVGKNGIDSRAGRANYQVEGDVFKLAEGQQELKVPLVFEKDGVIYRKVFVLKPGSYALEVNFEITNQSPKPIEVVPYAQLTHTLVESSGSMAMPTYTGGAYSSSETNYKKYSFEDMEKADLDIHTKAGWVALLQHYFVSAWIPNQDANNTLYTLTNTKKHLGSIGYRSAPIVIENGATETIHTQLWTGPKLQDQMADVANHLDLTVDYGWAWFIAKPLFKLLTLIQSLVQNWGLAIIGVTLVVKAILYPLTKAQYTSMAKMRMLQPKLQEMRERFGEDRQRMSQEMMKLYKEEKVNPLGGCLPILLQMPIFIALYWTFMEAVELRHAPFFGWVQDLSAQDPYFILPILMGASMFLLQKMSPTPVADPMQQKVMTFMPLIFMVFFLFFPAGLVLYWLASNLITIAQQWLIYRGLEKKGLHTRVKK.

5 helical membrane passes run 7-27 (LLFMALLFISFLIYQQWQVDY), 345-365 (LVQNWGLAIIGVTLVVKAILY), 415-435 (LGGCLPILLQMPIFIALYWTF), 453-473 (LSAQDPYFILPILMGASMFLL), and 492-512 (FMPLIFMVFFLFFPAGLVLYW).

Belongs to the OXA1/ALB3/YidC family. Type 1 subfamily. Interacts with the Sec translocase complex via SecD. Specifically interacts with transmembrane segments of nascent integral membrane proteins during membrane integration.

The protein localises to the cell inner membrane. In terms of biological role, required for the insertion and/or proper folding and/or complex formation of integral membrane proteins into the membrane. Involved in integration of membrane proteins that insert both dependently and independently of the Sec translocase complex, as well as at least some lipoproteins. Aids folding of multispanning membrane proteins. This is Membrane protein insertase YidC from Histophilus somni (strain 129Pt) (Haemophilus somnus).